The primary structure comprises 410 residues: Dual-specificity RNA methyltransferase RlmN (410 aa).

Positions 7–26 (VSSENLDGQQQSSSTPASPA) are disordered. Low complexity predominate over residues 15–26 (QQQSSSTPASPA). Residue Glu-120 is the Proton acceptor of the active site. Residues 130–373 (TGSRKTLCIS…CTIRQTRGDD (244 aa)) enclose the Radical SAM core domain. A disulfide bridge connects residues Cys-137 and Cys-378. Cys-144, Cys-148, and Cys-151 together coordinate [4Fe-4S] cluster. S-adenosyl-L-methionine-binding positions include 200–201 (GE), Ser-232, 254–256 (SLH), and Asn-335. Catalysis depends on Cys-378, which acts as the S-methylcysteine intermediate.

This sequence belongs to the radical SAM superfamily. RlmN family. [4Fe-4S] cluster is required as a cofactor.

It localises to the cytoplasm. It carries out the reaction adenosine(2503) in 23S rRNA + 2 reduced [2Fe-2S]-[ferredoxin] + 2 S-adenosyl-L-methionine = 2-methyladenosine(2503) in 23S rRNA + 5'-deoxyadenosine + L-methionine + 2 oxidized [2Fe-2S]-[ferredoxin] + S-adenosyl-L-homocysteine. It catalyses the reaction adenosine(37) in tRNA + 2 reduced [2Fe-2S]-[ferredoxin] + 2 S-adenosyl-L-methionine = 2-methyladenosine(37) in tRNA + 5'-deoxyadenosine + L-methionine + 2 oxidized [2Fe-2S]-[ferredoxin] + S-adenosyl-L-homocysteine. In terms of biological role, specifically methylates position 2 of adenine 2503 in 23S rRNA and position 2 of adenine 37 in tRNAs. m2A2503 modification seems to play a crucial role in the proofreading step occurring at the peptidyl transferase center and thus would serve to optimize ribosomal fidelity. The chain is Dual-specificity RNA methyltransferase RlmN from Acinetobacter baumannii (strain AB307-0294).